Here is a 586-residue protein sequence, read N- to C-terminus: Actin-related protein 9 (586 aa).

The segment at 141–169 (STPIVDKDADVDPLQRSTPDDTEPNSEEN) is disordered.

The protein belongs to the actin family. ARP8 subfamily.

This is Actin-related protein 9 (ARP9) from Oryza sativa subsp. indica (Rice).